Here is a 439-residue protein sequence, read N- to C-terminus: Agnestins biosynthesis cluster transcriptional coactivator AgnL9 (439 aa).

The region spanning 79–149 is the HTH iclR-type domain; the sequence is MTIQTQLLAC…EPGHITHSAL (71 aa). A DNA-binding region (H-T-H motif) is located at residues 109–128; that stretch reads MKDVSELIDVPENQLGRIVR.

The protein resides in the nucleus. Functionally, transcriptional coactivator; part of the gene cluster that mediates the biosynthesis of agnestins, dihydroxy-xanthone metabolites. The polypeptide is Agnestins biosynthesis cluster transcriptional coactivator AgnL9 (Paecilomyces divaricatus (Penicillium divaricatum)).